Here is a 115-residue protein sequence, read N- to C-terminus: Replication initiation control protein YabA (115 aa).

His-86, Cys-88, Cys-102, and Cys-105 together coordinate Zn(2+).

This sequence belongs to the YabA family. Homotetramer. Interacts with both DnaA and DnaN, acting as a bridge between these two proteins. Requires Zn(2+) as cofactor.

It is found in the cytoplasm. The protein resides in the nucleoid. Its function is as follows. Involved in control of chromosome replication initiation. Inhibits the cooperative binding of DnaA to the oriC region, thus negatively regulating initiation of chromosome replication. Inhibits the ability of DnaA-ATP to form a helix on DNA; does not disassemble preformed DnaA-DNA helices. Decreases the residence time of DnaA on the chromosome at its binding sites (oriC, replication forks and promoter-binding sites). Tethers DnaA to the replication machinery via the DNA polymerase beta sliding clamp subunit (dnaN). Associates with oriC and other DnaA targets on the chromosome in a DnaA-dependent manner. The sequence is that of Replication initiation control protein YabA from Enterococcus faecalis (strain ATCC 700802 / V583).